Reading from the N-terminus, the 85-residue chain is Serine protease inhibitor Cvsi-2 (85 aa).

An N-terminal signal peptide occupies residues 1–18 (MKVAVVVALLCFVCYTAA).

Post-translationally, contains 6 disulfide bonds. In terms of tissue distribution, detected in hemolymph (at protein level). Within the digestive gland expression is limited to the basophil cells of the digestive diverticula.

It is found in the secreted. In terms of biological role, slow-binding inhibitor of serine proteases. The inhibitor rapidly binds to the protease forming a weak enzyme-inhibitor complex, and this is followed by a slow isomerization forming a tight-binding enzyme-inhibitor complex. Active against subtilisin A with a dissociation constant of 0.18 nM. Active against perkinsin. Not active against thermolysin, papain or pepsin. This Crassostrea virginica (Eastern oyster) protein is Serine protease inhibitor Cvsi-2.